The chain runs to 328 residues: Malate dehydrogenase (328 aa).

Residue 11–17 coordinates NAD(+); it reads GAAGQIG. R92 and R98 together coordinate substrate. Residues N105, Q112, and 129–131 contribute to the NAD(+) site; that span reads VGN. N131 and R162 together coordinate substrate. The Proton acceptor role is filled by H187.

The protein belongs to the LDH/MDH superfamily. MDH type 2 family.

It carries out the reaction (S)-malate + NAD(+) = oxaloacetate + NADH + H(+). Catalyzes the reversible oxidation of malate to oxaloacetate. The protein is Malate dehydrogenase of Coxiella burnetii (strain CbuG_Q212) (Coxiella burnetii (strain Q212)).